The sequence spans 875 residues: Alanine--tRNA ligase (875 aa).

Histidine 562, histidine 566, cysteine 665, and histidine 669 together coordinate Zn(2+).

Belongs to the class-II aminoacyl-tRNA synthetase family. Zn(2+) is required as a cofactor.

It is found in the cytoplasm. It catalyses the reaction tRNA(Ala) + L-alanine + ATP = L-alanyl-tRNA(Ala) + AMP + diphosphate. Functionally, catalyzes the attachment of alanine to tRNA(Ala) in a two-step reaction: alanine is first activated by ATP to form Ala-AMP and then transferred to the acceptor end of tRNA(Ala). Also edits incorrectly charged Ser-tRNA(Ala) and Gly-tRNA(Ala) via its editing domain. The protein is Alanine--tRNA ligase of Saccharophagus degradans (strain 2-40 / ATCC 43961 / DSM 17024).